Here is a 283-residue protein sequence, read N- to C-terminus: Protein BASIC PENTACYSTEINE5 (283 aa).

An alanine-zipper region spans residues 51 to 86 (AVKERNEAVAATKEALASRDEALEQRDKALSERDNA). A coiled-coil region spans residues 63–89 (KEALASRDEALEQRDKALSERDNAIME). A disordered region spans residues 122 to 176 (EESHLPNPSPISTIPPEAANTRPTKRKKESKQGKKMGEDLNRPVASPGKKSRKDW). Positions 151–162 (SKQGKKMGEDLN) are enriched in basic and acidic residues.

Belongs to the BBR/BPC family. Homodimer. Heterodimer. Expressed in seedlings, leaves and pistils.

It localises to the nucleus. Functionally, transcriptional regulator that specifically binds to GA-rich elements (GAGA-repeats) present in regulatory sequences of genes involved in developmental processes. The chain is Protein BASIC PENTACYSTEINE5 (BPC5) from Arabidopsis thaliana (Mouse-ear cress).